Here is a 1851-residue protein sequence, read N- to C-terminus: Voltage-dependent calcium channel type A subunit alpha-1 (1851 aa).

Over 1 to 38 (MGGPKKEENPPGGGPTSLFILTEDNPIRKYTRFIIEWP) the chain is Cytoplasmic. An I repeat occupies 25–316 (NPIRKYTRFI…LVLGVLSGEF (292 aa)). Residues 39–57 (PFEYAVLLTIIANCVVLAL) traverse the membrane as a helical segment. At 58–75 (EEHLPGGDKTVLAQKLEK) the chain is on the extracellular side. A helical membrane pass occupies residues 76-95 (TEAYFLCIFCVEASLKILAL). Topologically, residues 96-107 (GLVLHKHSYLRN) are cytoplasmic. The chain crosses the membrane as a helical span at residues 108–128 (IWNIMDFFVVVTGFMTQYPQI). Residues 129 to 133 (GPEVD) lie on the Extracellular side of the membrane. Residues 134–152 (LRTLRAIRVLRPLKLVSGI) form a helical membrane-spanning segment. Residues 153-171 (PSLQVVLKSIIKAMAPLLQ) lie on the Cytoplasmic side of the membrane. The helical transmembrane segment at 172–191 (IGLLVLFAIVIFAIIGLEFY) threads the bilayer. Residues 192 to 288 (SGALHKTCYS…WTNDALGSAF (97 aa)) are Extracellular-facing. 2 N-linked (GlcNAc...) asparagine glycosylation sites follow: Asn234 and Asn235. Residues 289-313 (NWIYFVPLIVIGSFFMLNLVLGVLS) form a helical membrane-spanning segment. Residues 314 to 441 (GEFSNERNRV…FWIRHTVKTQ (128 aa)) are Cytoplasmic-facing. The interval 381–417 (RKKLKSLGKSKSTDTEEEEAEEDYGDDGYLKTRSKPQ) is disordered. Positions 395–406 (TEEEEAEEDYGD) are enriched in acidic residues. One copy of the II repeat lies at 427-670 (EKRFRFWIRH…VFLAIAVDNL (244 aa)). A helical membrane pass occupies residues 442–460 (WFYWFVIVLVFLNTVCVAV). The Extracellular segment spans residues 461–475 (EHYGQPSFLTEFLYY). A helical membrane pass occupies residues 476–495 (AEFIFLGLFMSEMFIKMYAL). Over 496–503 (GPRIYFES) the chain is Cytoplasmic. A helical membrane pass occupies residues 504-522 (SFNRFDCVVISGSIFEVIW). Residues 523-531 (SEVKGGSFG) are Extracellular-facing. The helical transmembrane segment at 532–550 (LSVLRALRLLRIFKVTKYW) threads the bilayer. At 551-569 (SSLRNLVISLLNSMRSIIS) the chain is on the cytoplasmic side. The chain crosses the membrane as a helical span at residues 570-589 (LLFLLFLFILIFALLGMQLF). Residues 590 to 642 (GGQFNLPGGTPETNFNTFPIALLTVFQILTGEDWNEVMYQGIISQGGAQKGMI) lie on the Extracellular side of the membrane. A helical membrane pass occupies residues 643 to 667 (YSIYFIVLVLFGNYTLLNVFLAIAV). Residues 668–767 (DNLANAQELT…IRRGAHWVVN (100 aa)) are Cytoplasmic-facing. The interval 710-741 (ENGDGAVAPSKSKGKKKEEEKKEEEEVTEGPK) is disordered. One copy of the III repeat lies at 762 to 1049 (AHWVVNLPYF…IITFQEQGEA (288 aa)). Residues 768 to 786 (LPYFDFFIMVVISMSSIAL) form a helical membrane-spanning segment. Residues 787 to 802 (AAEDPVRENSRRNKIL) lie on the Extracellular side of the membrane. A helical transmembrane segment spans residues 803–822 (NYFDYAFTGVFTIEMLLKIV). The Cytoplasmic portion of the chain corresponds to 823–834 (DLGVILHPGSYL). A helical transmembrane segment spans residues 835 to 853 (REFWNIMDAVVVICAAVSF). At 854-866 (GFDMSGSSAGQNL) the chain is on the extracellular side. An N-linked (GlcNAc...) asparagine glycan is attached at Asn865. A helical transmembrane segment spans residues 867–885 (STIKSLRVLRVLRPLKTIK). The Cytoplasmic segment spans residues 886-904 (RVPKLKAVFDCVVNSLKNV). Residues 905–924 (VNILIVYILFQFIFSVIGVQ) traverse the membrane as a helical segment. Topologically, residues 925-1013 (LFNGKFFYCT…EDRGPIQNFR (89 aa)) are extracellular. Residues 1014–1038 (IEMSIFYIVYFIVFPFFFVNIFVAL) form a helical membrane-spanning segment. Topologically, residues 1039–1093 (IIITFQEQGEAELQDGEIDKNQKSCIDFTIGARPLERYMPKNRNTFKYKVWRIVV) are cytoplasmic. The stretch at 1086–1347 (YKVWRIVVST…DNFDYLTRDS (262 aa)) is one IV repeat. The chain crosses the membrane as a helical span at residues 1094–1122 (STPFEYFIMMLIVFNTLLLMMKYHNQGDM). At 1123–1127 (YEKSL) the chain is on the extracellular side. Residues 1128–1147 (KYINMGFTGMFSVETVLKII) traverse the membrane as a helical segment. Residues 1148–1155 (GFGVKNFF) are Cytoplasmic-facing. A helical membrane pass occupies residues 1156-1174 (KDPWNIFDLITVLGSIVDA). The Extracellular portion of the chain corresponds to 1175–1184 (LWMEFGHDDS). Residues 1185 to 1203 (NSINVGFLRLFRAARLIKL) traverse the membrane as a helical segment. Residues 1204-1222 (LRQGYTIRILLWTFVQSFK) lie on the Cytoplasmic side of the membrane. Residues 1223 to 1242 (ALPYVCLLIAMLFFIYAIIG) form a helical membrane-spanning segment. Residues 1243–1308 (MQVFGNIKLG…DAEKAPGEYC (66 aa)) lie on the Extracellular side of the membrane. The interval 1306-1348 (EYCGSTLAYAYFVSFIFFCSFLMLNLFVAVIMDNFDYLTRDSS) is phenylalkylamine binding. Residues 1309-1333 (GSTLAYAYFVSFIFFCSFLMLNLFV) traverse the membrane as a helical segment. Over 1334 to 1851 (AVIMDNFDYL…HSDSDEEDWC (518 aa)) the chain is Cytoplasmic. The region spanning 1353–1388 (HHLDEFVRIWAEYDPNATGKIHYTEMYDMLKNMDPP) is the EF-hand domain. Residues Asp1366, Asn1368, Thr1370, Lys1372, and Glu1377 each contribute to the Ca(2+) site. Disordered regions lie at residues 1513–1572 (DASR…HHDI), 1588–1653 (TRHP…SPAR), 1685–1764 (RAGI…DRDR), and 1823–1851 (VLPS…EDWC). Residues 1589-1600 (RHPRHGNSHPRY) show a composition bias toward basic residues. Positions 1604–1619 (SWSASTSPARSPSPSR) are enriched in low complexity. 2 stretches are compositionally biased toward polar residues: residues 1637-1649 (YGTT…SRSP) and 1698-1710 (KPST…TNIN). Positions 1734–1764 (HHRDLLRDPRDMYYSSRERERDRERLRDRDR) are enriched in basic and acidic residues.

It belongs to the calcium channel alpha-1 subunit (TC 1.A.1.11) family. In terms of tissue distribution, expressed widely in the embryonic nervous system.

The protein localises to the membrane. Functionally, voltage-sensitive calcium channels (VSCC) mediate the entry of calcium ions into excitable cells and are also involved in a variety of calcium-dependent processes, including muscle contraction, neurotransmitter release, gene expression, cell motility, cell division and cell death. Probably encodes a dihydropyridine-insensitive current. Vital for survival to adulthood. The chain is Voltage-dependent calcium channel type A subunit alpha-1 (cac) from Drosophila melanogaster (Fruit fly).